Consider the following 384-residue polypeptide: S-adenosylmethionine synthase (384 aa).

Residue H15 participates in ATP binding. D17 serves as a coordination point for Mg(2+). E43 is a binding site for K(+). Residues E56 and Q99 each coordinate L-methionine. The flexible loop stretch occupies residues 99 to 109; it reads QSPDINQGVDR. ATP is bound by residues 164 to 166, 230 to 231, D239, 245 to 246, A262, and K266; these read DAK, RF, and RK. Position 239 (D239) interacts with L-methionine. K270 is an L-methionine binding site.

It belongs to the AdoMet synthase family. Homotetramer; dimer of dimers. Mg(2+) serves as cofactor. It depends on K(+) as a cofactor.

It localises to the cytoplasm. It carries out the reaction L-methionine + ATP + H2O = S-adenosyl-L-methionine + phosphate + diphosphate. Its pathway is amino-acid biosynthesis; S-adenosyl-L-methionine biosynthesis; S-adenosyl-L-methionine from L-methionine: step 1/1. Catalyzes the formation of S-adenosylmethionine (AdoMet) from methionine and ATP. The overall synthetic reaction is composed of two sequential steps, AdoMet formation and the subsequent tripolyphosphate hydrolysis which occurs prior to release of AdoMet from the enzyme. This Yersinia pseudotuberculosis serotype IB (strain PB1/+) protein is S-adenosylmethionine synthase.